A 115-amino-acid polypeptide reads, in one-letter code: Mediator of RNA polymerase II transcription subunit 9 (115 aa).

The segment at 1-31 is disordered; sequence MATGGTVRPAEEPEEEEEEEDEAVEEEEEED. Residues 12–31 show a composition bias toward acidic residues; sequence EPEEEEEEEDEAVEEEEEED. Residues 31-107 adopt a coiled-coil conformation; sequence DYTFLPLVHD…SELLQKYKSL (77 aa).

It belongs to the Mediator complex subunit 9 family. As to quaternary structure, component of the Mediator complex.

It localises to the nucleus. Functionally, component of the Mediator complex, a coactivator involved in the regulated transcription of nearly all RNA polymerase II-dependent genes. Mediator functions as a bridge to convey information from gene-specific regulatory proteins to the basal RNA polymerase II transcription machinery. Mediator is recruited to promoters by direct interactions with regulatory proteins and serves as a scaffold for the assembly of a functional preinitiation complex with RNA polymerase II and the general transcription factors. This Xenopus laevis (African clawed frog) protein is Mediator of RNA polymerase II transcription subunit 9 (med9).